We begin with the raw amino-acid sequence, 358 residues long: Alanine racemase (358 aa).

Catalysis depends on Lys35, which acts as the Proton acceptor; specific for D-alanine. Residue Lys35 is modified to N6-(pyridoxal phosphate)lysine. Arg130 contributes to the substrate binding site. The active-site Proton acceptor; specific for L-alanine is Tyr255. Met303 is a substrate binding site.

It belongs to the alanine racemase family. Pyridoxal 5'-phosphate is required as a cofactor.

The enzyme catalyses L-alanine = D-alanine. It functions in the pathway amino-acid biosynthesis; D-alanine biosynthesis; D-alanine from L-alanine: step 1/1. Catalyzes the interconversion of L-alanine and D-alanine. May also act on other amino acids. In Shewanella putrefaciens (strain CN-32 / ATCC BAA-453), this protein is Alanine racemase (alr).